Consider the following 321-residue polypeptide: Porphobilinogen deaminase (321 aa).

Cysteine 246 is subject to S-(dipyrrolylmethanemethyl)cysteine.

The protein belongs to the HMBS family. In terms of assembly, monomer. Requires dipyrromethane as cofactor.

It carries out the reaction 4 porphobilinogen + H2O = hydroxymethylbilane + 4 NH4(+). Its pathway is porphyrin-containing compound metabolism; protoporphyrin-IX biosynthesis; coproporphyrinogen-III from 5-aminolevulinate: step 2/4. Functionally, tetrapolymerization of the monopyrrole PBG into the hydroxymethylbilane pre-uroporphyrinogen in several discrete steps. The protein is Porphobilinogen deaminase of Helicobacter hepaticus (strain ATCC 51449 / 3B1).